A 169-amino-acid polypeptide reads, in one-letter code: uncharacterized protein (169 aa).

Residue Ser-165 is modified to Phosphoserine.

This is an uncharacterized protein from Drosophila melanogaster (Fruit fly).